A 120-amino-acid polypeptide reads, in one-letter code: Small ribosomal subunit protein uS19 (120 aa).

Belongs to the universal ribosomal protein uS19 family.

In Naegleria gruberi (Amoeba), this protein is Small ribosomal subunit protein uS19 (RPS15).